Consider the following 235-residue polypeptide: Transmembrane protein 215 (235 aa).

The next 2 helical transmembrane spans lie at 12–32 (LVVALVSVFLVFGFMFTVSGM) and 40–60 (IPLLAIGPAICLPGIAAIALA). Residues 99–146 (SDLESGKGSSDELAKKAGLRGKQLPQGPGEVPMASSVTTPTPTEEGEC) are disordered.

It localises to the membrane. The chain is Transmembrane protein 215 (Tmem215) from Mus musculus (Mouse).